The sequence spans 113 residues: U11-theraphotoxin-Hhn1a (113 aa).

Positions 1–21 (MNTVRVTFLLVFVLAVSLGQA) are cleaved as a signal peptide. A propeptide spanning residues 22–74 (DKDENRMEMQGKTEQGKSYLDFAENLLLQKLEELEAKLLEEDSEESRNSRQKR) is cleaved from the precursor. 3 disulfide bridges follow: Cys-75–Cys-90, Cys-82–Cys-95, and Cys-89–Cys-110.

Belongs to the neurotoxin 14 (magi-1) family. 01 (HNTX-16) subfamily. As to expression, expressed by the venom gland.

It is found in the secreted. Probable ion channel inhibitor. The chain is U11-theraphotoxin-Hhn1a from Cyriopagopus hainanus (Chinese bird spider).